The chain runs to 469 residues: 3-isopropylmalate dehydratase large subunit (469 aa).

[4Fe-4S] cluster is bound by residues C347, C407, and C410.

Belongs to the aconitase/IPM isomerase family. LeuC type 1 subfamily. Heterodimer of LeuC and LeuD. Requires [4Fe-4S] cluster as cofactor.

It carries out the reaction (2R,3S)-3-isopropylmalate = (2S)-2-isopropylmalate. It functions in the pathway amino-acid biosynthesis; L-leucine biosynthesis; L-leucine from 3-methyl-2-oxobutanoate: step 2/4. In terms of biological role, catalyzes the isomerization between 2-isopropylmalate and 3-isopropylmalate, via the formation of 2-isopropylmaleate. This is 3-isopropylmalate dehydratase large subunit from Prochlorococcus marinus (strain NATL2A).